The chain runs to 185 residues: 16S rRNA aminocarboxypropyltransferase (185 aa).

S-adenosyl-L-methionine-binding residues include Thr-19, Ile-69, Leu-93, Tyr-108, and Thr-112.

Belongs to the TDD superfamily. TSR3 family.

The protein resides in the cytoplasm. It carries out the reaction an N(1)-methylpseudouridine in rRNA + S-adenosyl-L-methionine = N(1)-methyl-N(3)-[(3S)-3-amino-3-carboxypropyl]pseudouridine in rRNA + S-methyl-5'-thioadenosine + H(+). In terms of biological role, aminocarboxypropyltransferase that catalyzes the aminocarboxypropyl transfer on pseudouridine corresponding to position 914 in M.jannaschii 16S rRNA. It constitutes the last step in biosynthesis of the hypermodified N1-methyl-N3-(3-amino-3-carboxypropyl) pseudouridine (m1acp3-Psi). The chain is 16S rRNA aminocarboxypropyltransferase from Vulcanisaeta distributa (strain DSM 14429 / JCM 11212 / NBRC 100878 / IC-017).